We begin with the raw amino-acid sequence, 93 residues long: Pyrimidine/purine nucleoside phosphorylase (93 aa).

Belongs to the nucleoside phosphorylase PpnP family.

The enzyme catalyses a purine D-ribonucleoside + phosphate = a purine nucleobase + alpha-D-ribose 1-phosphate. It carries out the reaction adenosine + phosphate = alpha-D-ribose 1-phosphate + adenine. It catalyses the reaction cytidine + phosphate = cytosine + alpha-D-ribose 1-phosphate. The catalysed reaction is guanosine + phosphate = alpha-D-ribose 1-phosphate + guanine. The enzyme catalyses inosine + phosphate = alpha-D-ribose 1-phosphate + hypoxanthine. It carries out the reaction thymidine + phosphate = 2-deoxy-alpha-D-ribose 1-phosphate + thymine. It catalyses the reaction uridine + phosphate = alpha-D-ribose 1-phosphate + uracil. The catalysed reaction is xanthosine + phosphate = alpha-D-ribose 1-phosphate + xanthine. Functionally, catalyzes the phosphorolysis of diverse nucleosides, yielding D-ribose 1-phosphate and the respective free bases. Can use uridine, adenosine, guanosine, cytidine, thymidine, inosine and xanthosine as substrates. Also catalyzes the reverse reactions. The chain is Pyrimidine/purine nucleoside phosphorylase from Vibrio atlanticus (strain LGP32) (Vibrio splendidus (strain Mel32)).